The chain runs to 382 residues: Opsin Rh3 (382 aa).

At M1–M56 the chain is on the extracellular side. The N-linked (GlcNAc...) asparagine glycan is linked to N12. Residues N57–V81 traverse the membrane as a helical segment. At F82–N93 the chain is on the cytoplasmic side. The chain crosses the membrane as a helical span at residues I94–F118. Residues H119 to F132 lie on the Extracellular side of the membrane. C129 and C206 form a disulfide bridge. The helical transmembrane segment at G133 to Y152 threads the bilayer. The Cytoplasmic segment spans residues D153–K170. A helical transmembrane segment spans residues A171–G195. Topologically, residues R196 to L219 are extracellular. A helical transmembrane segment spans residues F220–V247. Residues F248 to K283 lie on the Cytoplasmic side of the membrane. The chain crosses the membrane as a helical span at residues A284–A307. At F308–T315 the chain is on the extracellular side. A helical transmembrane segment spans residues P316 to S340. K327 is modified (N6-(retinylidene)lysine). Residues H341–A382 are Cytoplasmic-facing.

Belongs to the G-protein coupled receptor 1 family. Opsin subfamily. Post-translationally, phosphorylated on some or all of the serine and threonine residues present in the C-terminal region.

The protein resides in the membrane. Functionally, visual pigments are the light-absorbing molecules that mediate vision. They consist of an apoprotein, opsin, covalently linked to cis-retinal. This chain is Opsin Rh3 (Rh3), found in Drosophila pseudoobscura pseudoobscura (Fruit fly).